We begin with the raw amino-acid sequence, 162 residues long: UPF0114 protein Sputw3181_3501 (162 aa).

Helical transmembrane passes span 15–35 (IMAP…IKFF), 53–73 (LVLV…IVMV), and 136–156 (IMWY…MGYL).

It belongs to the UPF0114 family.

The protein localises to the cell membrane. The protein is UPF0114 protein Sputw3181_3501 of Shewanella sp. (strain W3-18-1).